The following is a 401-amino-acid chain: Argininosuccinate synthase (401 aa).

ATP-binding positions include 10–18 (AYSGGVDTS) and Ala38. Tyr89 lines the L-citrulline pocket. Gly119 is an ATP binding site. 3 residues coordinate L-aspartate: Thr121, Asn125, and Asp126. Asn125 serves as a coordination point for L-citrulline. 5 residues coordinate L-citrulline: Arg129, Ser177, Ser186, Glu262, and Tyr274.

The protein belongs to the argininosuccinate synthase family. Type 1 subfamily. As to quaternary structure, homotetramer.

Its subcellular location is the cytoplasm. It catalyses the reaction L-citrulline + L-aspartate + ATP = 2-(N(omega)-L-arginino)succinate + AMP + diphosphate + H(+). It functions in the pathway amino-acid biosynthesis; L-arginine biosynthesis; L-arginine from L-ornithine and carbamoyl phosphate: step 2/3. This Microcystis aeruginosa (strain NIES-843 / IAM M-2473) protein is Argininosuccinate synthase.